The primary structure comprises 601 residues: Group B oligopeptidase PepB (601 aa).

Residue His386 participates in Zn(2+) binding. Residue Glu387 is part of the active site. 2 residues coordinate Zn(2+): His390 and His393.

This sequence belongs to the peptidase M3B family. It depends on Zn(2+) as a cofactor.

The protein localises to the cytoplasm. Has oligopeptidase activity and degrades a variety of small bioactive peptides, including bradykinin, neurotensin, and peptide fragments of substance P and adrenocorticotropin. Also hydrolyzes the synthetic collagen-like substrate N-(3-[2-furyl]acryloyl)-Leu-Gly-Pro-Ala (FALGPA). The chain is Group B oligopeptidase PepB (pepB) from Streptococcus agalactiae serotype III (strain NEM316).